A 522-amino-acid polypeptide reads, in one-letter code: ATP synthase subunit alpha (522 aa).

176 to 183 (GDRQTGKT) is an ATP binding site.

The protein belongs to the ATPase alpha/beta chains family. As to quaternary structure, F-type ATPases have 2 components, CF(1) - the catalytic core - and CF(0) - the membrane proton channel. CF(1) has five subunits: alpha(3), beta(3), gamma(1), delta(1), epsilon(1). CF(0) has four main subunits: a(1), b(1), b'(1) and c(9-12).

It is found in the cell membrane. It catalyses the reaction ATP + H2O + 4 H(+)(in) = ADP + phosphate + 5 H(+)(out). Produces ATP from ADP in the presence of a proton gradient across the membrane. The alpha chain is a regulatory subunit. In Chloroflexus aurantiacus (strain ATCC 29366 / DSM 635 / J-10-fl), this protein is ATP synthase subunit alpha.